Consider the following 144-residue polypeptide: Large ribosomal subunit protein uL15 (144 aa).

The tract at residues 1-57 (MRLNTLSPAPGSKPSAKRVGRGIGSGLGKTCGRGHKGQKSRSGGSVRPGFEGGQMPL) is disordered. Over residues 21–31 (RGIGSGLGKTC) the composition is skewed to gly residues.

This sequence belongs to the universal ribosomal protein uL15 family. In terms of assembly, part of the 50S ribosomal subunit.

Its function is as follows. Binds to the 23S rRNA. The chain is Large ribosomal subunit protein uL15 from Photobacterium profundum (strain SS9).